Reading from the N-terminus, the 223-residue chain is Deoxyribose-phosphate aldolase (223 aa).

Asp89 acts as the Proton donor/acceptor in catalysis. The active-site Schiff-base intermediate with acetaldehyde is Lys152. Lys181 functions as the Proton donor/acceptor in the catalytic mechanism.

Belongs to the DeoC/FbaB aldolase family. DeoC type 1 subfamily.

Its subcellular location is the cytoplasm. The catalysed reaction is 2-deoxy-D-ribose 5-phosphate = D-glyceraldehyde 3-phosphate + acetaldehyde. It participates in carbohydrate degradation; 2-deoxy-D-ribose 1-phosphate degradation; D-glyceraldehyde 3-phosphate and acetaldehyde from 2-deoxy-alpha-D-ribose 1-phosphate: step 2/2. Catalyzes a reversible aldol reaction between acetaldehyde and D-glyceraldehyde 3-phosphate to generate 2-deoxy-D-ribose 5-phosphate. In Listeria innocua serovar 6a (strain ATCC BAA-680 / CLIP 11262), this protein is Deoxyribose-phosphate aldolase.